The following is a 919-amino-acid chain: MKKLKKPIIITALAIFTIYLFSLFVDYYGDWLWFKNMGYDSVFDTILLTKILSFILFFLIFILFSGIHIHFAYHGGSQSRNNIPLADDDPRQKILPLYQGKAVAWLWAVIILFFAIVMGSYASAYWHDFLKFIYPSSFDLKEPIFGKDAGFYIFTLPVYQFVVSWYLFMVVITFIGVLSSYYIDTAFNFTSRKFNITGKAKSHLTQLTAFFALGVSALYFIKLYNILYSSHGVAYGPSYMDVHAQIPAYWTILVMSLIITILLFFYPFYKKRKVIVSALGLWVLVWAGFVWIYPGIVEQYIVKPNELKKETPYILNNIKFTRTAFGLDNIKVKPFSVDQNITYKDILDNRHTIENIRLWDRRPLIQTYKQLQEIRLYYDFKNVQVDRYHFHKYTEVVLGARELPELGIPARAQTWVNNHLIYTHGYGVVMNPVNEITSDGMPELIVKDIPPTTSVNLNIKQMAIYYGEETNQFVLVNTRAKEFDYPKGDDNVYASYAGKGGVQISSLFRRLVYAWKFSDINILFTGYLTKQSRIMFHRNIMQRVATLAPFLSFDSQPYPVVGKDGKLYWIQDAYTTSNMFPYSEPLYHNPIERGINYINNSVKIVIDAYDGDVSFYVINPKDPLVQTYEKIYPKLFKPFSNMPGFLKAHIRYPTDLFNIQTKMYNVYHMTDPKVFYNQEDYWEIPNETYSRGEQKMFPYYIIMRLPDTKNEEFILMIPITPSKKDNMNAWLCARCDAPNYGELIVYTLPKDKLIYGPMQIQARINQQPDISSELTLWGQQGSRVIKGNQLVIPIKNSFIYVEPVYLQSEEGQIPELKRVIVAFKEKVEMRKTLDEALEAVFNVAPGQMANPQQSAGKHVGGRTVLSIEAHKALEHYNKAMDSLRQNDWANFGKELDEMKSVLLKMTQSETKSSGMPKVK.

7 helical membrane passes run Ile8 to Tyr28, Ile51 to Phe71, Ala102 to Ala122, Val158 to Leu178, Leu207 to Leu227, Ile246 to Tyr266, and Val274 to Pro294.

The protein belongs to the UPF0182 family.

It is found in the cell membrane. The polypeptide is UPF0182 protein SUN_1015 (Sulfurovum sp. (strain NBC37-1)).